We begin with the raw amino-acid sequence, 127 residues long: Large ribosomal subunit protein bL17 (127 aa).

It belongs to the bacterial ribosomal protein bL17 family. In terms of assembly, part of the 50S ribosomal subunit. Contacts protein L32.

The chain is Large ribosomal subunit protein bL17 from Alcanivorax borkumensis (strain ATCC 700651 / DSM 11573 / NCIMB 13689 / SK2).